Reading from the N-terminus, the 231-residue chain is Small ribosomal subunit protein uS3c (231 aa).

The region spanning 39 to 123 (LRNFIKKKYI…HLRLSVKPLR (85 aa)) is the KH type-2 domain.

This sequence belongs to the universal ribosomal protein uS3 family. Part of the 30S ribosomal subunit.

Its subcellular location is the plastid. It localises to the chloroplast. This chain is Small ribosomal subunit protein uS3c (rps3), found in Chlorella vulgaris (Green alga).